A 278-amino-acid polypeptide reads, in one-letter code: MKESYYSIGEVSKLANVSIKALRYYDKIDLFKPAYVDPDTSYRYYTDSQLIHLDLIKSLKYIGTPLEEMKKAQDLEMEELFAFYTEQERQIREKLDFLSALEQTISLVKKRMKRQMEYPALGEVFVLDEEEIRIIQTEAEGIGPENVLNASYSKLKKFIESADGFTNNSYGATFSFQPYTSIDEMTYRHIFTPVLTNKQISSITPDMEITTIPKGRYACIAYNFSPEHYFLNLQKLIKYIADRQLTVVSDVYELIIPIHYSPKKQEEYRVEMKIRIAE.

The 71-residue stretch at 5–75 folds into the HTH merR-type domain; that stretch reads YYSIGEVSKL…LEEMKKAQDL (71 aa). Positions 8-27 form a DNA-binding region, H-T-H motif; it reads IGEVSKLANVSIKALRYYDK.

In terms of assembly, binds DNA as a homodimer.

Its function is as follows. Activates transcription of the bmr gene in response to structurally dissimilar drugs. Binds rhodamine as an inducer. This is Multidrug-efflux transporter 1 regulator (bmrR) from Bacillus subtilis (strain 168).